A 373-amino-acid chain; its full sequence is D-alanine--D-alanine ligase A (373 aa).

The 210-residue stretch at 146–355 (KRLAEFAGIP…YGELLSRLVD (210 aa)) folds into the ATP-grasp domain. 179–234 (VEGLSLPVFVKPCNMGSSVGIHKVKTQDALEAALDDAFRYDVKVLVQQGIDAREIE) provides a ligand contact to ATP. Aspartate 308, glutamate 322, and asparagine 324 together coordinate Mg(2+).

It belongs to the D-alanine--D-alanine ligase family. It depends on Mg(2+) as a cofactor. Mn(2+) is required as a cofactor.

The protein localises to the cytoplasm. It carries out the reaction 2 D-alanine + ATP = D-alanyl-D-alanine + ADP + phosphate + H(+). The protein operates within cell wall biogenesis; peptidoglycan biosynthesis. Cell wall formation. This is D-alanine--D-alanine ligase A from Bradyrhizobium diazoefficiens (strain JCM 10833 / BCRC 13528 / IAM 13628 / NBRC 14792 / USDA 110).